The primary structure comprises 377 residues: UPF0754 membrane protein lin2327 (377 aa).

A run of 2 helical transmembrane segments spans residues 1 to 21 (MSVLFTILLMAVIGGFIGAMT) and 357 to 377 (YLGGILGGFIGIIQGILAMWI).

Belongs to the UPF0754 family.

It localises to the cell membrane. In Listeria innocua serovar 6a (strain ATCC BAA-680 / CLIP 11262), this protein is UPF0754 membrane protein lin2327.